We begin with the raw amino-acid sequence, 227 residues long: Cytochrome c oxidase subunit 2 (227 aa).

The Mitochondrial intermembrane segment spans residues 1–14; it reads MPYPLQLGFQDATS. Residues 15–45 traverse the membrane as a helical segment; it reads PIMEELLHFHDHTLMIVFLISSLVLYIITLM. The Mitochondrial matrix segment spans residues 46-59; sequence LTTKLTHTSTMDAQ. A helical membrane pass occupies residues 60-87; the sequence is EVETVWTILPAVILILIALPSLRILYMM. Over 88–227 the chain is Mitochondrial intermembrane; sequence DEINNPLLTI…HFEDWSTSML (140 aa). His161, Cys196, Glu198, Cys200, His204, and Met207 together coordinate Cu cation. Glu198 is a binding site for Mg(2+).

The protein belongs to the cytochrome c oxidase subunit 2 family. In terms of assembly, component of the cytochrome c oxidase (complex IV, CIV), a multisubunit enzyme composed of 14 subunits. The complex is composed of a catalytic core of 3 subunits MT-CO1, MT-CO2 and MT-CO3, encoded in the mitochondrial DNA, and 11 supernumerary subunits COX4I, COX5A, COX5B, COX6A, COX6B, COX6C, COX7A, COX7B, COX7C, COX8 and NDUFA4, which are encoded in the nuclear genome. The complex exists as a monomer or a dimer and forms supercomplexes (SCs) in the inner mitochondrial membrane with NADH-ubiquinone oxidoreductase (complex I, CI) and ubiquinol-cytochrome c oxidoreductase (cytochrome b-c1 complex, complex III, CIII), resulting in different assemblies (supercomplex SCI(1)III(2)IV(1) and megacomplex MCI(2)III(2)IV(2)). Found in a complex with TMEM177, COA6, COX18, COX20, SCO1 and SCO2. Interacts with TMEM177 in a COX20-dependent manner. Interacts with COX20. Interacts with COX16. Requires Cu cation as cofactor.

The protein resides in the mitochondrion inner membrane. The catalysed reaction is 4 Fe(II)-[cytochrome c] + O2 + 8 H(+)(in) = 4 Fe(III)-[cytochrome c] + 2 H2O + 4 H(+)(out). Its function is as follows. Component of the cytochrome c oxidase, the last enzyme in the mitochondrial electron transport chain which drives oxidative phosphorylation. The respiratory chain contains 3 multisubunit complexes succinate dehydrogenase (complex II, CII), ubiquinol-cytochrome c oxidoreductase (cytochrome b-c1 complex, complex III, CIII) and cytochrome c oxidase (complex IV, CIV), that cooperate to transfer electrons derived from NADH and succinate to molecular oxygen, creating an electrochemical gradient over the inner membrane that drives transmembrane transport and the ATP synthase. Cytochrome c oxidase is the component of the respiratory chain that catalyzes the reduction of oxygen to water. Electrons originating from reduced cytochrome c in the intermembrane space (IMS) are transferred via the dinuclear copper A center (CU(A)) of subunit 2 and heme A of subunit 1 to the active site in subunit 1, a binuclear center (BNC) formed by heme A3 and copper B (CU(B)). The BNC reduces molecular oxygen to 2 water molecules using 4 electrons from cytochrome c in the IMS and 4 protons from the mitochondrial matrix. The sequence is that of Cytochrome c oxidase subunit 2 (MT-CO2) from Dasypus novemcinctus (Nine-banded armadillo).